Consider the following 226-residue polypeptide: Membrane protein (226 aa).

Residues 1-11 (MSNGSIPVDEV) lie on the Virion surface side of the membrane. A helical transmembrane segment spans residues 12 to 32 (IEHLRNWNFTWNIILTILLVV). The Intravirion portion of the chain corresponds to 33-41 (LQYGHYKYS). The chain crosses the membrane as a helical span at residues 42-62 (VFLYGVKMAILWILWPLVLAL). At 63–75 (SLFDAWASFQVNW) the chain is on the virion surface side. Residues 76–96 (VFFAFSILMACITLMLWIMYF) form a helical membrane-spanning segment. The Intravirion segment spans residues 97-226 (VNSIRLWRRT…TDSEKVPHLV (130 aa)). The segment at 200–216 (RSKHGDYSAVSNPSAVL) is interaction with N protein.

This sequence belongs to the alphacoronaviruses M protein family. Homomultimer. Interacts with envelope E protein in the budding compartment of the host cell, which is located between endoplasmic reticulum and the Golgi complex. Forms a complex with HE and S proteins. Interacts with nucleocapsid N protein. This interaction probably participates in RNA packaging into the virus.

It localises to the virion membrane. The protein resides in the host Golgi apparatus membrane. In terms of biological role, component of the viral envelope that plays a central role in virus morphogenesis and assembly via its interactions with other viral proteins. In Sus scrofa (Pig), this protein is Membrane protein.